An 82-amino-acid chain; its full sequence is Teratocyte protein CftICK-IV (82 aa).

A signal peptide spans 1–21 (MAKILLTFIILTCLIVTITPA).

Contains 4 disulfide bonds. In terms of tissue distribution, abundantly expressed by teratocytes, which are extra-embryonic cells released by parasitoid wasps into their hosts during larval eclosion.

It localises to the secreted. In terms of biological role, this endoparasitoid wasp peptide has immununosuppressive and insecticidal activities. Suppress cellular immunity which is detectable as a reduction of hemocyte spread index in the host. In vivo, ingestion of this peptide moderately reduces leaf consumption of D.saccharalis, a permissive host for the lepidoptere C.flavipes. This chain is Teratocyte protein CftICK-IV, found in Cotesia flavipes (Parasitic wasp).